A 200-amino-acid polypeptide reads, in one-letter code: Putative 3-methyladenine DNA glycosylase (200 aa).

Belongs to the DNA glycosylase MPG family.

The protein is Putative 3-methyladenine DNA glycosylase of Methanocella arvoryzae (strain DSM 22066 / NBRC 105507 / MRE50).